A 79-amino-acid chain; its full sequence is Acyl carrier protein (79 aa).

In terms of domain architecture, Carrier spans 2–77 (DNIEQRVKKI…LAIDFAKSKA (76 aa)). Residue Ser-37 is modified to O-(pantetheine 4'-phosphoryl)serine.

This sequence belongs to the acyl carrier protein (ACP) family. In terms of processing, 4'-phosphopantetheine is transferred from CoA to a specific serine of apo-ACP by AcpS. This modification is essential for activity because fatty acids are bound in thioester linkage to the sulfhydryl of the prosthetic group.

It is found in the cytoplasm. Its pathway is lipid metabolism; fatty acid biosynthesis. Carrier of the growing fatty acid chain in fatty acid biosynthesis. The protein is Acyl carrier protein of Polynucleobacter necessarius subsp. necessarius (strain STIR1).